The sequence spans 197 residues: Large ribosomal subunit protein uL18 (197 aa).

Belongs to the universal ribosomal protein uL18 family. Part of the 50S ribosomal subunit. Contacts the 5S and 23S rRNAs.

Functionally, this is one of the proteins that bind and probably mediate the attachment of the 5S RNA into the large ribosomal subunit, where it forms part of the central protuberance. This chain is Large ribosomal subunit protein uL18, found in Sulfolobus acidocaldarius (strain ATCC 33909 / DSM 639 / JCM 8929 / NBRC 15157 / NCIMB 11770).